The chain runs to 55 residues: ATP synthase F(0) complex subunit 8 (55 aa).

The chain crosses the membrane as a helical span at residues 4–24; it reads LNPHPWFSIFITSWLILIIIL.

The protein belongs to the ATPase protein 8 family. In terms of assembly, component of the ATP synthase complex composed at least of ATP5F1A/subunit alpha, ATP5F1B/subunit beta, ATP5MC1/subunit c (homooctomer), MT-ATP6/subunit a, MT-ATP8/subunit 8, ATP5ME/subunit e, ATP5MF/subunit f, ATP5MG/subunit g, ATP5MK/subunit k, ATP5MJ/subunit j, ATP5F1C/subunit gamma, ATP5F1D/subunit delta, ATP5F1E/subunit epsilon, ATP5PF/subunit F6, ATP5PB/subunit b, ATP5PD/subunit d, ATP5PO/subunit OSCP. ATP synthase complex consists of a soluble F(1) head domain (subunits alpha(3) and beta(3)) - the catalytic core - and a membrane F(0) domain - the membrane proton channel (subunits c, a, 8, e, f, g, k and j). These two domains are linked by a central stalk (subunits gamma, delta, and epsilon) rotating inside the F1 region and a stationary peripheral stalk (subunits F6, b, d, and OSCP).

Its subcellular location is the mitochondrion membrane. Its function is as follows. Subunit 8, of the mitochondrial membrane ATP synthase complex (F(1)F(0) ATP synthase or Complex V) that produces ATP from ADP in the presence of a proton gradient across the membrane which is generated by electron transport complexes of the respiratory chain. ATP synthase complex consist of a soluble F(1) head domain - the catalytic core - and a membrane F(1) domain - the membrane proton channel. These two domains are linked by a central stalk rotating inside the F(1) region and a stationary peripheral stalk. During catalysis, ATP synthesis in the catalytic domain of F(1) is coupled via a rotary mechanism of the central stalk subunits to proton translocation. In vivo, can only synthesize ATP although its ATP hydrolase activity can be activated artificially in vitro. Part of the complex F(0) domain. This Pelomedusa subrufa (African side-necked turtle) protein is ATP synthase F(0) complex subunit 8.